The sequence spans 763 residues: Forkhead box protein M1 (763 aa).

Residues 1-53 (MKTSPRRPLILKRRRLPLPVQNAPSETSEEEPKRSPAQQESNQAEASKEVAES) are disordered. A compositionally biased stretch (polar residues) spans 36–45 (PAQQESNQAE). Residues K163, K201, and K325 each participate in a glycyl lysine isopeptide (Lys-Gly) (interchain with G-Cter in SUMO2) cross-link. Residues 198 to 232 (RSIKQEMEEKENCHLEQRQVKVEEPSRPSASWQNS) are disordered. Positions 200-223 (IKQEMEEKENCHLEQRQVKVEEPS) are enriched in basic and acidic residues. The fork-head DNA-binding region spans 235–327 (ERPPYSYMAM…LTLDQVFKPL (93 aa)). A disordered region spans residues 329-351 (PGSPQLPEHLESQQKRPNPELRR). Position 331 is a phosphoserine (S331). Residues 336 to 351 (EHLESQQKRPNPELRR) are compositionally biased toward basic and acidic residues. K356 is covalently cross-linked (Glycyl lysine isopeptide (Lys-Gly) (interchain with G-Cter in SUMO2)). At S376 the chain carries Phosphoserine; by CHEK2. Residues K422 and K440 each participate in a glycyl lysine isopeptide (Lys-Gly) (interchain with G-Cter in SUMO2) cross-link. The tract at residues 482-711 (PPLEEWPSPA…PGSPEPQVSG (230 aa)) is disordered. At S489 the chain carries Phosphoserine; by GSK3. Positions 494–503 (FKEESSHSWE) are enriched in basic and acidic residues. At S522 the chain carries Phosphoserine. Polar residues predominate over residues 583-592 (DPASQLSYSQ). Phosphothreonine; by CDK1 is present on T611. 3 positions are modified to phosphothreonine: T620, T627, and T662. At S693 the chain carries Phosphoserine; by CDK1. S730 and S739 each carry phosphoserine; by PLK1.

Interacts with PINT87aa which is encoded by the circular form of the long non-coding RNA LINC-PINT; the interaction inhibits FOXM1-mediated transcription of PHB2. In terms of processing, phosphorylated in M (mitotic) phase. Phosphorylation by the checkpoint kinase CHEK2 in response to DNA damage increases the FOXM1 protein stability probably stimulating the transcription of genes involved in DNA repair. Phosphorylated by CDK1 in late S and G2 phases, creating docking sites for the POLO box domains of PLK1. Subsequently, PLK1 binds and phosphorylates FOXM1, leading to activation of transcriptional activity and subsequent enhanced expression of key mitotic regulators. Phosphorylated by GSK3B leading to ubiquitination and proteasomal degradation. Ubiquitinated in a FBXW7-dependent manner leading to proteasomal degradation. Expressed in thymus, testis, small intestine, colon followed by ovary. Appears to be expressed only in adult organs containing proliferating/cycling cells or in response to growth factors. Also expressed in epithelial cell lines derived from tumors. Not expressed in resting cells. Isoform 2 is highly expressed in testis.

It localises to the nucleus. In terms of biological role, transcription factor regulating the expression of cell cycle genes essential for DNA replication and mitosis. Plays a role in the control of cell proliferation. Also plays a role in DNA break repair, participating in the DNA damage checkpoint response. Promotes transcription of PHB2. The protein is Forkhead box protein M1 (FOXM1) of Homo sapiens (Human).